Here is a 100-residue protein sequence, read N- to C-terminus: uncharacterized protein (100 aa).

In terms of assembly, may interact with ribosomes.

This is an uncharacterized protein from Saccharomyces cerevisiae (strain ATCC 204508 / S288c) (Baker's yeast).